A 199-amino-acid chain; its full sequence is Tumor protein p53-inducible nuclear protein 2 (199 aa).

The LIR signature appears at 26–41 (VSEEDEVDGWLIIDLQ). Disordered regions lie at residues 41–69 (QDSY…LMDE), 117–153 (LESG…LHHA), and 173–199 (LQRA…ARES). Residues 47–64 (PPDPRASPAPAGRPPPAP) are compositionally biased toward pro residues. S136 is modified (phosphoserine).

In terms of assembly, interacts with VMP1, GABARAP, GABARAPL1, GABARAPL2, MAP1LC3A, MAP1LC3B, MAP1LC3C and THRA. In terms of tissue distribution, abundantly expressed in skeletal muscle and heart and expression is highly repressed in muscle from obese diabetic rats.

Its subcellular location is the cytoplasm. The protein resides in the cytosol. It is found in the nucleus. The protein localises to the PML body. It localises to the cytoplasmic vesicle. Its subcellular location is the autophagosome. Functionally, dual regulator of transcription and autophagy. Positively regulates autophagy and is required for autophagosome formation and processing. May act as a scaffold protein that recruits MAP1LC3A, GABARAP and GABARAPL2 and brings them to the autophagosome membrane by interacting with VMP1 where, in cooperation with the BECN1-PI3-kinase class III complex, they trigger autophagosome development. Acts as a transcriptional activator of THRA. The protein is Tumor protein p53-inducible nuclear protein 2 (Tp53inp2) of Rattus norvegicus (Rat).